Reading from the N-terminus, the 358-residue chain is MVMRSVDLRSDTVTRPTDAMREAMCNAEVDDDVLGYDPTARRLEEEMAKMMGKEAALFVPSGTMGNLISVMVHCDVRGSEVILGDNCHIHVYENGGISTIGGVHPKTVKNEEDGTMDLEAIEAAIRDPKGSTFYPSTRLICLENTHANSGGRCLSVEYTEKVGEIAKRHGVKLHIDGARLFNASIALGVPVHKLVKAADSVQVCLSKGLGAPVGSVIVGSQSFIEKAKTVRKTLGGGMRQIGVLCAAALVALQENLPKLQHDHKKAKLLAEGLNQMKGIRVNVAAVETNMIFMDMEDGSRLTAEKLRKNLEENGILLIRGNSSRIRIVIHHQITTSDVHYTLSCFQQAMLTMQEPSRT.

N6-(pyridoxal phosphate)lysine is present on Lys-207.

The protein belongs to the threonine aldolase family. Requires pyridoxal 5'-phosphate as cofactor. In terms of tissue distribution, expressed in root tips, seedlings, carpels and seeds.

It catalyses the reaction L-threonine = acetaldehyde + glycine. The enzyme catalyses L-allo-threonine = acetaldehyde + glycine. The protein operates within amino-acid degradation; L-threonine degradation via aldolase pathway; acetaldehyde and glycine from L-threonine: step 1/1. Its function is as follows. Threonine aldolase involved in threonine degradation to glycine. May play a role in the removal of L-allo-threonine. This is Low-specificity L-threonine aldolase 1 from Arabidopsis thaliana (Mouse-ear cress).